The primary structure comprises 217 residues: 3-oxoadipate CoA-transferase subunit B (217 aa).

Residue Glu50 is part of the active site.

This sequence belongs to the 3-oxoacid CoA-transferase subunit B family. As to quaternary structure, heterodimer.

It catalyses the reaction 3-oxoadipate + succinyl-CoA = 3-oxoadipyl-CoA + succinate. Its pathway is aromatic compound metabolism; beta-ketoadipate pathway; acetyl-CoA and succinyl-CoA from 3-oxoadipate: step 1/2. In Acinetobacter baylyi (strain ATCC 33305 / BD413 / ADP1), this protein is 3-oxoadipate CoA-transferase subunit B (pcaJ).